We begin with the raw amino-acid sequence, 173 residues long: Large ribosomal subunit protein uL16 (173 aa).

The protein belongs to the universal ribosomal protein uL16 family.

This chain is Large ribosomal subunit protein uL16, found in Methanococcus maripaludis (strain C5 / ATCC BAA-1333).